A 179-amino-acid polypeptide reads, in one-letter code: Putative FBD-associated F-box protein At3g12840 (179 aa).

The region spanning 14-60 is the F-box domain; that stretch reads AARINDLPDDLLATVLSFVPTKDAVATSILSKRWRPIWKRAVNLESD. One can recognise an FBD domain in the interval 101 to 152; that stretch reads KWKQPDFVPLSLYRSLEAFEWIGFKGREKTEKKAAFHILRNACNLKTMAITT.

This is Putative FBD-associated F-box protein At3g12840 from Arabidopsis thaliana (Mouse-ear cress).